The sequence spans 179 residues: Large ribosomal subunit protein uL5 (179 aa).

This sequence belongs to the universal ribosomal protein uL5 family. As to quaternary structure, part of the 50S ribosomal subunit; part of the 5S rRNA/L5/L18/L25 subcomplex. Contacts the 5S rRNA and the P site tRNA. Forms a bridge to the 30S subunit in the 70S ribosome.

Functionally, this is one of the proteins that bind and probably mediate the attachment of the 5S RNA into the large ribosomal subunit, where it forms part of the central protuberance. In the 70S ribosome it contacts protein S13 of the 30S subunit (bridge B1b), connecting the 2 subunits; this bridge is implicated in subunit movement. Contacts the P site tRNA; the 5S rRNA and some of its associated proteins might help stabilize positioning of ribosome-bound tRNAs. This Maridesulfovibrio salexigens (strain ATCC 14822 / DSM 2638 / NCIMB 8403 / VKM B-1763) (Desulfovibrio salexigens) protein is Large ribosomal subunit protein uL5.